Consider the following 267-residue polypeptide: 3-methyl-2-oxobutanoate hydroxymethyltransferase (267 aa).

Residues Asp45 and Asp84 each coordinate Mg(2+). Residues 45 to 46, Asp84, and Lys113 contribute to the 3-methyl-2-oxobutanoate site; that span reads DS. Glu115 serves as a coordination point for Mg(2+). Glu182 serves as the catalytic Proton acceptor.

This sequence belongs to the PanB family. Homodecamer; pentamer of dimers. Requires Mg(2+) as cofactor.

It is found in the cytoplasm. The catalysed reaction is 3-methyl-2-oxobutanoate + (6R)-5,10-methylene-5,6,7,8-tetrahydrofolate + H2O = 2-dehydropantoate + (6S)-5,6,7,8-tetrahydrofolate. The protein operates within cofactor biosynthesis; coenzyme A biosynthesis. Its function is as follows. Catalyzes the reversible reaction in which hydroxymethyl group from 5,10-methylenetetrahydrofolate is transferred onto alpha-ketoisovalerate to form ketopantoate. This is 3-methyl-2-oxobutanoate hydroxymethyltransferase from Sulfurisphaera tokodaii (strain DSM 16993 / JCM 10545 / NBRC 100140 / 7) (Sulfolobus tokodaii).